Consider the following 281-residue polypeptide: 2-dehydro-3-deoxyphosphooctonate aldolase (281 aa).

This sequence belongs to the KdsA family.

The protein resides in the cytoplasm. The enzyme catalyses D-arabinose 5-phosphate + phosphoenolpyruvate + H2O = 3-deoxy-alpha-D-manno-2-octulosonate-8-phosphate + phosphate. It participates in carbohydrate biosynthesis; 3-deoxy-D-manno-octulosonate biosynthesis; 3-deoxy-D-manno-octulosonate from D-ribulose 5-phosphate: step 2/3. Its pathway is bacterial outer membrane biogenesis; lipopolysaccharide biosynthesis. This chain is 2-dehydro-3-deoxyphosphooctonate aldolase, found in Pseudomonas fluorescens (strain Pf0-1).